The chain runs to 208 residues: NAD(P)H-quinone oxidoreductase subunit M, chloroplastic (208 aa).

A chloroplast-targeting transit peptide spans 1–21 (MAATSSYTACTKFSMLGWIGG). Low complexity predominate over residues 37-49 (QQAEVEESQQVNA). Residues 37–70 (QQAEVEESQQVNAQEEEQEKMKQQGKQKLPRPVE) form a disordered region.

The protein belongs to the NDH complex subunit M family. Part of the chloroplast NDH complex, composed of a mixture of chloroplast and nucleus encoded subunits. Component of the NDH subcomplex A, at least composed of ndhH, ndhI, ndhJ, ndhK, ndhL, ndhM, ndhN and ndhO.

The protein localises to the plastid. It localises to the chloroplast thylakoid membrane. It carries out the reaction a plastoquinone + NADH + (n+1) H(+)(in) = a plastoquinol + NAD(+) + n H(+)(out). It catalyses the reaction a plastoquinone + NADPH + (n+1) H(+)(in) = a plastoquinol + NADP(+) + n H(+)(out). Its function is as follows. NDH shuttles electrons from NAD(P)H:plastoquinone, via FMN and iron-sulfur (Fe-S) centers, to quinones in the photosynthetic chain and possibly in a chloroplast respiratory chain. The immediate electron acceptor for the enzyme in this species is believed to be plastoquinone. Couples the redox reaction to proton translocation, and thus conserves the redox energy in a proton gradient. In Vitis vinifera (Grape), this protein is NAD(P)H-quinone oxidoreductase subunit M, chloroplastic.